The following is an 89-amino-acid chain: Nitrogen regulatory protein (89 aa).

In terms of domain architecture, PTS EIIA type-2 spans 6–89 (TILTPGRSLV…ALLHLEAPID (84 aa)). His-68 serves as the catalytic Tele-phosphohistidine intermediate.

The protein resides in the cytoplasm. Its function is as follows. Seems to have a role in regulating nitrogen assimilation. The polypeptide is Nitrogen regulatory protein (ptsN) (Pseudomonas putida (Arthrobacter siderocapsulatus)).